The primary structure comprises 436 residues: Phosphomethylpyrimidine synthase (436 aa).

Residues asparagine 69, methionine 98, tyrosine 127, histidine 163, 185–187 (SRG), 226–229 (DACR), and glutamate 265 contribute to the substrate site. Zn(2+) is bound at residue histidine 269. Tyrosine 292 lines the substrate pocket. Zn(2+) is bound at residue histidine 333. The [4Fe-4S] cluster site is built by cysteine 409, cysteine 412, and cysteine 416.

Belongs to the ThiC family. Requires [4Fe-4S] cluster as cofactor.

The enzyme catalyses 5-amino-1-(5-phospho-beta-D-ribosyl)imidazole + S-adenosyl-L-methionine = 4-amino-2-methyl-5-(phosphooxymethyl)pyrimidine + CO + 5'-deoxyadenosine + formate + L-methionine + 3 H(+). The protein operates within cofactor biosynthesis; thiamine diphosphate biosynthesis. Functionally, catalyzes the synthesis of the hydroxymethylpyrimidine phosphate (HMP-P) moiety of thiamine from aminoimidazole ribotide (AIR) in a radical S-adenosyl-L-methionine (SAM)-dependent reaction. This chain is Phosphomethylpyrimidine synthase, found in Clostridium perfringens (strain ATCC 13124 / DSM 756 / JCM 1290 / NCIMB 6125 / NCTC 8237 / Type A).